Here is a 160-residue protein sequence, read N- to C-terminus: uncharacterized protein (160 aa).

Residues 1–25 form the signal peptide; the sequence is MKVTLLLLLIAVLLLLLIFMKVCKQ.

This is an uncharacterized protein from Invertebrate iridescent virus 6 (IIV-6).